Reading from the N-terminus, the 735-residue chain is Polyribonucleotide nucleotidyltransferase (735 aa).

Mg(2+) is bound by residues aspartate 515 and aspartate 521. One can recognise a KH domain in the interval 581–641; sequence PKLELFSVDP…KNVDAAKDYI (61 aa). The segment at 649 to 671 is disordered; sequence NSRGFGKKPHGHDRRDKDRQKPT. Residues 675 to 734 form the S1 motif domain; the sequence is GDEFDGVVKSVVDFGAFIELKDGVDGLLHISKIKTPLNVGDRLKVCVSEQKGNKISLSLV.

The protein belongs to the polyribonucleotide nucleotidyltransferase family. It depends on Mg(2+) as a cofactor.

The protein localises to the cytoplasm. It catalyses the reaction RNA(n+1) + phosphate = RNA(n) + a ribonucleoside 5'-diphosphate. In terms of biological role, involved in mRNA degradation. Catalyzes the phosphorolysis of single-stranded polyribonucleotides processively in the 3'- to 5'-direction. The polypeptide is Polyribonucleotide nucleotidyltransferase (Campylobacter curvus (strain 525.92)).